We begin with the raw amino-acid sequence, 285 residues long: Geranyl diphosphate 2-C-methyltransferase (285 aa).

This sequence belongs to the geranyl diphosphate 2-C-methyltransferase family. Mg(2+) serves as cofactor.

It carries out the reaction (2E)-geranyl diphosphate + S-adenosyl-L-methionine = (E)-2-methylgeranyl diphosphate + S-adenosyl-L-homocysteine + H(+). Its function is as follows. Catalyzes the SAM-dependent methylation of geranyl diphosphate (GPP) to yield (E)-2-methylgeranyl diphosphate (2-MeGPP). In Saccharopolyspora erythraea (strain ATCC 11635 / DSM 40517 / JCM 4748 / NBRC 13426 / NCIMB 8594 / NRRL 2338), this protein is Geranyl diphosphate 2-C-methyltransferase.